A 424-amino-acid polypeptide reads, in one-letter code: Serpin A11 (424 aa).

The N-terminal stretch at 1–21 is a signal peptide; that stretch reads MGPVWLWLWLLVAEVLLPVHC. Asn-108, Asn-171, Asn-352, and Asn-387 each carry an N-linked (GlcNAc...) asparagine glycan.

Belongs to the serpin family.

The protein localises to the secreted. This chain is Serpin A11 (Serpina11), found in Mus musculus (Mouse).